Here is a 194-residue protein sequence, read N- to C-terminus: Calcium channel flower (194 aa).

Helical transmembrane passes span 34-54, 59-79, and 107-127; these read LLGI…VFSI, VSCL…MLLE, and GLYI…ASLF.

Belongs to the calcium channel flower family. As to quaternary structure, homomultimer. Associates with the dally/ magu complex.

It localises to the cell membrane. It is found in the cytoplasmic vesicle. The protein resides in the secretory vesicle. Its subcellular location is the synaptic vesicle membrane. The protein localises to the presynaptic cell membrane. It localises to the endosome. With respect to regulation, channel activity is inhibited by La(3+), which reduces Ca(2+) influx and thus inhibits it's function in promoting activity-dependent bulk endocytosis (ADBE) in response to high stimuli. Its function is as follows. Transmembrane protein which mediates synaptic endocytosis, fitness-based cell culling, neuronal culling, morphogen gradient scaling, and calcium transport. Regulates synaptic endocytosis and hence couples exo- with endocytosis. Controls two major modes of synaptic vesicle (SV) endocytosis in the synaptic boutons of neuromuscular junctions (NMJs); Ca(2+) channel-independent Clathrin-mediated endocytosis (CME) in response to mild stimulation, and Ca(2+) channel-dependent activity-dependent bulk endocytosis (ADBE) in response to strong stimulation. Functions in ADBE and subsequent SV reformation from bulk endosomes by initiating Ca(2+) channel-dependent phosphatidylinositol 4,5-bisphosphate (PtdIns(4,5)P2) compartmentalization in synaptic boutons. There it acts at the periactive zone to provide the low Ca(2+) levels required to initiate Calcineurin activation and upregulate PtdIns(4,5)P2. Conversely PtdIns(4,5)P2 enhances fwe Ca(2+) channel-activity, establishing a positive feedback loop that induces PtdIns(4,5)P2 microdomain at the periactive zone. These microdomains trigger bulk membrane invagination (i.e. ADBE) by triggering actin polymerization while also promoting localization of fwe to bulk endosomes, thereby removing the ADBE trigger to reduce endocytosis and prevent excess membrane uptake. PtdIns(4,5)P2 then promotes SV reformation from the bulk endosomes, to coordinate ADBE and subsequent SV reformation. Different combinations of the flower isoforms at the cell membrane are also required for the identification and elimination of suboptimal or supernumerary cells during development, regeneration, and adulthood. Required for the recognition and elimination of unfit cells in the developing wing during cell competition. In the developing pupal retina, mediates the elimination of unwanted postmitotic neurons, including supernumerary photoreceptor neurons that form at the periphery of the retina and are contained within incomplete ommatidia units. Also required for efficient elimination and replacement of old neurons by newly generated neurons during regeneration in the adult brain following mechanical injury. Downstream of the flower fitness fingerprints, cells identified as unwanted or unfit are eliminated via apoptosis through the expression of ahuizotl (azot). However, the cells marked for elimination by the flower isoforms only undergo apoptosis if additional thresholds are met; (1) their neighboring fit/healthy cells express different levels of the fwe isoforms, and (2) the levels of the protective signal SPARC expressed by the loser or unwanted cells are unable to inhibit caspase activation. These additional thresholds for flower-mediated apoptosis, allows useful cells to recover from transient and limited stress before they are unnecessarily eliminated. Functions with dally and magu in a mechanism of scaling, which utilises apoptosis to ensure that the dpp morphogen gradient, which mediates organ growth, remains proportional to the size of the growing wing. In this mechanism, fwe represses dally- and Magu-dependent activity in expanding the gradient, and dally/Magu inhibits fwe-dependent apoptosis to keep cell death rate low. When the levels of these different proteins are optimally regulated the gradient correctly scales with organ growth but when this fails, fwe-mediated apoptosis is activated to trim the developing tissue to match the correct size of the gradient. The polypeptide is Calcium channel flower (Drosophila erecta (Fruit fly)).